A 466-amino-acid polypeptide reads, in one-letter code: GTPase Der (466 aa).

2 consecutive EngA-type G domains span residues 3 to 167 (PTLV…PDEP) and 176 to 350 (PKIA…GAAM). GTP is bound by residues 9–16 (GRSNVGKS), 56–60 (DTGGF), 119–122 (NKTE), 182–189 (GRPNVGKS), 229–233 (DTAGL), and 294–297 (NKWD). A KH-like domain is found at 351–435 (AHLPTPRLTR…PLRIEFRTGR (85 aa)). The interval 433–466 (TGRNPYAGKSPAPLTEAEAKRAHRRRRYGRKKYG) is disordered. Over residues 453 to 466 (RAHRRRRYGRKKYG) the composition is skewed to basic residues.

This sequence belongs to the TRAFAC class TrmE-Era-EngA-EngB-Septin-like GTPase superfamily. EngA (Der) GTPase family. Associates with the 50S ribosomal subunit.

Functionally, GTPase that plays an essential role in the late steps of ribosome biogenesis. This is GTPase Der from Nitrosospira multiformis (strain ATCC 25196 / NCIMB 11849 / C 71).